The primary structure comprises 398 residues: uncharacterized protein (398 aa).

This is an uncharacterized protein from Buchnera aphidicola subsp. Baizongia pistaciae (strain Bp).